The primary structure comprises 231 residues: Hypoxanthine-guanine-xanthine phosphoribosyltransferase (231 aa).

GMP is bound by residues K77, 144 to 152, K176, and D204; that span reads EDIIDTGKT. Residue D148 is the Proton acceptor of the active site. D204 is a binding site for Mg(2+).

This sequence belongs to the purine/pyrimidine phosphoribosyltransferase family. As to quaternary structure, homotetramer. Requires Mg(2+) as cofactor.

It is found in the cytoplasm. The enzyme catalyses IMP + diphosphate = hypoxanthine + 5-phospho-alpha-D-ribose 1-diphosphate. It carries out the reaction GMP + diphosphate = guanine + 5-phospho-alpha-D-ribose 1-diphosphate. The catalysed reaction is XMP + diphosphate = xanthine + 5-phospho-alpha-D-ribose 1-diphosphate. It functions in the pathway purine metabolism; GMP biosynthesis via salvage pathway; GMP from guanine: step 1/1. Its pathway is purine metabolism; IMP biosynthesis via salvage pathway; IMP from hypoxanthine: step 1/1. It participates in purine metabolism; XMP biosynthesis via salvage pathway; XMP from xanthine: step 1/1. Catalyzes the transfer of a ribosyl phosphate group from 5-phosphoribose 1-diphosphate to the N(9) of hypoxanthine, guanine or xanthine, leading to IMP, GMP and XMP, respectively. Plays a central role in the generation of purine nucleotides through the purine salvage pathway. In Plasmodium falciparum (isolate K1 / Thailand), this protein is Hypoxanthine-guanine-xanthine phosphoribosyltransferase (LACZ).